A 598-amino-acid chain; its full sequence is MAYVPLSGTDVRIFSNVPFSNDYKSTRWFTNADAQYSYFNAKPRVHVINECNFVGLKEGTPHIRVNKRIDDLYNACYMIFRNTQYSNKWFYCFVTRLEYVNSGVTNLYFEIDVIQTWMFDFKFQPSYIVREHQEMWDANNEPLTNTIDEGLNYGTEYDVVAVEQYKPYGDLMFMVCISKSKMHATAGETFKAGEIAANINGAPQPLSYYVHPFYEDGSSPKVTIGSNEVQVSKPTDFLKNMFTQEHAVNNIVSLYVTDYIGLNIHYDESAKTMSLRDTMFEHAQIADDKHPNVNTIYLKEVKEYEEKTIDTGYKFASFANNEQSKLLMYPYCVTTITDFKGNQIDIKNEYVNGSNLKIQVRGSLGVSNKVTYSVQDYNADTTLSGDQNLTASCNTSLINNNPNDVAIINDYLSAYLQGNKNSLENQKDSILFNGVMSMLGNGIGAVGSAATGSAVGVASSATGMVSSAGNAVLQIQGMQAKQADIANTPPQLVKMGGNTAYDYGNGYRGVYVIKKQIKEEYRNILSDFSRKYGYKTNLVKMPNLRTRESYNYVQTKDCNIIGNLNNEDLQKIRTIFDSGITLWHADPVGDYTLNNEVR.

The protein belongs to the picovirinae distal tube protein family. As to quaternary structure, homohexamer; forms a hexameric tube structure with six flexible hydrophobic loops.

Its subcellular location is the virion. In terms of biological role, distal (knob) tail protein that plugs the end of the tube before DNA ejection and forms a channel perforating the host membrane during ejection. The sequence is that of Tail knob protein gp9 (9) from Bacillus subtilis (Bacteriophage B103).